We begin with the raw amino-acid sequence, 108 residues long: T-cell acute lymphocytic leukemia protein 2 homolog (108 aa).

In terms of domain architecture, bHLH spans 2 to 54 (TRKIFTNTRERWRQQSVNNAFAKLRKLIPTHPPDKKLSKNETLRLAMRYINFL). The segment at 76 to 108 (GLFPPKTRLPDEDDRTLLNDYRVPSPGPSHGAP) is disordered.

This chain is T-cell acute lymphocytic leukemia protein 2 homolog (Tal2), found in Mus musculus (Mouse).